The chain runs to 112 residues: Ig kappa chain V-III region TEPC 124 (112 aa).

The interval aspartate 1–cysteine 23 is framework-1. Cysteine 23 and cysteine 92 form a disulfide bridge. Positions arginine 24–residue 38 are complementarity-determining-1. A framework-2 region spans residues tryptophan 39 to tyrosine 53. Positions arginine 54 to serine 60 are complementarity-determining-2. A framework-3 region spans residues glycine 61 to cysteine 92. Residues residue 93–threonine 101 form a complementarity-determining-3 region. A framework-4 region spans residues phenylalanine 102–lysine 111.

This is Ig kappa chain V-III region TEPC 124 from Mus musculus (Mouse).